Reading from the N-terminus, the 398-residue chain is Cytochrome b (398 aa).

A helical transmembrane segment spans residues 45–65 (LGSIAGIALVIQIITGVILAM). Residues histidine 95 and histidine 109 each contribute to the heme b site. A run of 8 helical transmembrane segments spans residues 97–117 (VGAS…LYYG), 129–149 (IGII…VLPW), 164–184 (FSAI…GFSV), 192–212 (FFSL…LHLL), 245–265 (FVGF…EPNY), 304–324 (LAGV…PWLD), 335–355 (PIYR…GYLG), and 364–384 (IIIS…VLPL). The heme b site is built by histidine 196 and histidine 210.

It belongs to the cytochrome b family. In terms of assembly, the main subunits of complex b-c1 are: cytochrome b, cytochrome c1 and the Rieske protein. Requires heme b as cofactor.

The protein localises to the cell membrane. Component of the ubiquinol-cytochrome c reductase complex (complex III or cytochrome b-c1 complex), which is a respiratory chain that generates an electrochemical potential coupled to ATP synthesis. This Rickettsia typhi (strain ATCC VR-144 / Wilmington) protein is Cytochrome b (petB).